A 260-amino-acid polypeptide reads, in one-letter code: Snake venom serine protease KN6 (260 aa).

The N-terminal stretch at 1-18 (MVLIRVLANLLILQLSYA) is a signal peptide. Positions 19 to 24 (QKSSEL) are excised as a propeptide. Positions 25-251 (VIGGDECNIN…HLDWIQSIIA (227 aa)) constitute a Peptidase S1 domain. Cystine bridges form between cysteine 31-cysteine 165, cysteine 100-cysteine 258, cysteine 144-cysteine 212, cysteine 176-cysteine 191, and cysteine 202-cysteine 227. Histidine 67 functions as the Charge relay system in the catalytic mechanism. Asparagine 105 is a glycosylation site (N-linked (GlcNAc...) asparagine). The active-site Charge relay system is the aspartate 112. Residue asparagine 172 is glycosylated (N-linked (GlcNAc...) asparagine). Serine 206 acts as the Charge relay system in catalysis. N-linked (GlcNAc...) asparagine glycans are attached at residues asparagine 213 and asparagine 255.

This sequence belongs to the peptidase S1 family. Snake venom subfamily. In terms of assembly, monomer. As to expression, expressed by the venom gland.

Its subcellular location is the secreted. Snake venom serine protease that may act in the hemostasis system of the prey. The protein is Snake venom serine protease KN6 of Trimeresurus stejnegeri (Chinese green tree viper).